The sequence spans 396 residues: Beta-1,3-N-acetylglucosaminyltransferase radical fringe (396 aa).

Topologically, residues Met-1 to Leu-6 are cytoplasmic. A helical; Signal-anchor for type II membrane protein membrane pass occupies residues Gly-7–Ile-27. Residues Pro-28–Arg-396 lie on the Lumenal side of the membrane. N-linked (GlcNAc...) asparagine glycans are attached at residues Asn-49 and Asn-120. Arg-145 provides a ligand contact to substrate. Asn-184 is a glycosylation site (N-linked (GlcNAc...) asparagine). 2 disulfide bridges follow: Cys-185–Cys-196 and Cys-214–Cys-277. Asp-218 is a substrate binding site. Position 219 (Asp-219) interacts with Mn(2+). The active site involves Asp-307. His-331 contributes to the Mn(2+) binding site. Cys-381 and Cys-390 form a disulfide bridge.

The protein belongs to the glycosyltransferase 31 family. Mn(2+) serves as cofactor. In terms of tissue distribution, detected in the mesanchymal region of the developing limb. Expressed in mesoderm but not in ectoderm with no evident boundary of expression.

Its subcellular location is the golgi apparatus membrane. The catalysed reaction is 3-O-(alpha-L-fucosyl)-L-threonyl-[EGF-like domain protein] + UDP-N-acetyl-alpha-D-glucosamine = 3-O-(N-acetyl-beta-D-glucosaminyl-(1-&gt;3)-alpha-L-fucosyl)-L-threonyl-[EGF-like domain protein] + UDP + H(+). It carries out the reaction 3-O-(alpha-L-fucosyl)-L-seryl-[EGF-like domain protein] + UDP-N-acetyl-alpha-D-glucosamine = 3-O-(N-acetyl-beta-D-glucosaminyl-(1-&gt;3)-alpha-L-fucosyl)-L-seryl-[EGF-like domain protein] + UDP + H(+). In terms of biological role, glycosyltransferase that initiates the elongation of O-linked fucose residues attached to EGF-like repeats in the extracellular domain of Notch molecules. Involved in forelimb development and in adult forelimb regeneration. The protein is Beta-1,3-N-acetylglucosaminyltransferase radical fringe (RFNG) of Notophthalmus viridescens (Eastern newt).